A 128-amino-acid polypeptide reads, in one-letter code: Small ribosomal subunit protein eS8 (128 aa).

It belongs to the eukaryotic ribosomal protein eS8 family. In terms of assembly, part of the 30S ribosomal subunit.

The polypeptide is Small ribosomal subunit protein eS8 (Methanococcus maripaludis (strain C7 / ATCC BAA-1331)).